Consider the following 236-residue polypeptide: Probable methylthioribulose-1-phosphate dehydratase (236 aa).

A disordered region spans residues 1–29 (MQNVQQPKKRKLSDEIIAEDEDYQRDPEH). Cys103 serves as a coordination point for substrate. Residues His121, His123, and His201 each contribute to the Zn(2+) site.

This sequence belongs to the aldolase class II family. MtnB subfamily. Zn(2+) serves as cofactor.

The protein localises to the cytoplasm. The enzyme catalyses 5-(methylsulfanyl)-D-ribulose 1-phosphate = 5-methylsulfanyl-2,3-dioxopentyl phosphate + H2O. It participates in amino-acid biosynthesis; L-methionine biosynthesis via salvage pathway; L-methionine from S-methyl-5-thio-alpha-D-ribose 1-phosphate: step 2/6. In terms of biological role, catalyzes the dehydration of methylthioribulose-1-phosphate (MTRu-1-P) into 2,3-diketo-5-methylthiopentyl-1-phosphate (DK-MTP-1-P). This Trichoplax adhaerens (Trichoplax reptans) protein is Probable methylthioribulose-1-phosphate dehydratase.